Reading from the N-terminus, the 328-residue chain is Nodulation protein Z (328 aa).

The GT23 domain maps to 6–317 (CPEGRSVISR…FDLARGVFCQ (312 aa)).

The protein belongs to the glycosyltransferase 23 family.

Fucosyltransferase which adds the fucose moiety of the nod factor on its terminal reducing N-acetylglucosamine end. Uses GDP-fucose as the donor group. This is Nodulation protein Z (nodZ) from Azorhizobium caulinodans (strain ATCC 43989 / DSM 5975 / JCM 20966 / LMG 6465 / NBRC 14845 / NCIMB 13405 / ORS 571).